The sequence spans 591 residues: DDB1- and CUL4-associated factor 8 (591 aa).

Over residues 1 to 14 the composition is skewed to basic and acidic residues; it reads MSSKRPSTDGRRDL. The segment at 1-140 is disordered; that stretch reads MSSKRPSTDG…EDWVSSETTA (140 aa). Serine 21 and serine 22 each carry phosphoserine. Positions 39–50 match the Nuclear export signal motif; that stretch reads IEVEASDLSLSL. Basic and acidic residues-rich tracts occupy residues 65-99 and 118-131; these read RGTD…HGHS and SRDQ…RALE. Phosphoserine occurs at positions 99, 123, and 124. 7 WD repeats span residues 185–224, 228–269, 275–315, 323–363, 379–418, 426–466, and 470–509; these read GHTG…PVLD, GHKS…CCKN, QHKG…PASK, EKKV…ENEN, ESKA…GAQY, RNNA…IIQF, and DKGG…STEL. Omega-N-methylarginine; by PRMT1 is present on arginine 198. The segment at 552 to 591 is disordered; sequence HRRWREPGVGATDADSDESPSSSDTSDEEEGPDRVQCMPS.

The protein belongs to the WD repeat DCAF8 family. In terms of assembly, interacts with DDB1, CUL4A and CUL4B. Interacts with KPNA1, KPNB1 and XPO1.

It localises to the nucleus. Its subcellular location is the cytoplasm. The protein operates within protein modification; protein ubiquitination. May function as a substrate receptor for CUL4-DDB1 E3 ubiquitin-protein ligase complex. This Rattus norvegicus (Rat) protein is DDB1- and CUL4-associated factor 8 (Dcaf8).